The sequence spans 887 residues: MGRRWGSPALQRFPVLVLLLLLQVCGRRCDEAAPCQPGFAAETFSFSVPQDSVAAGRELGRVSFAACSGRPWAVYVPTDTRFKVNGDGVVSTKRPLTLYGRKISFTIYAQDAMGKRHSARVTVGRHRHRRHHHNHHLQDTTPAVLTFPKHDPGFLRRQKRDWVIPPISCLENHRGPYPMRLVQIKSNKDKESKVYYSITGQGADSPPVGIFIIERETGWLEVTEQLDREKIDRYTLLSHAVSASGQPVEDPMEIIITVMDQNDNKPVFIKEVFVGYIEENAKPGTSVMTVNATDADDAVNTDNGIVSYSIVSQQPPRPHPQMFTIDPAKGIISVLGTGLDRETTPNYTLIVQATDQEGKGLSNTATAIIEVTDANDNIPIFNPTMYEGVVEENKPGTEVARLTVTDQDAPGSPAWQAVYHIKSGNLDGAFSIITDPSTNNGILKTAKGLDYETKSRYDLVVTVENKVPLSVPITLSTASVLVTVLDVNEPPVFVPPIKRVGVPEDLPVGQQVTSYTAQDPDRDMRQKITYRMGSDPAGWLYIHPENGIVTATQPLDRESVHAINSTYKAIILAVDNGIPDTTGTGTLLLLLQDVNDNGPTPEPRSFEICSRQPEKQILSIVDKDLPPHTYPFKAALEHGSSNNWTVEIRGQDELAMGLKKELEPGEYNIFVKLTDSQGKAQVTQVKAQVCECEGTAKNCERRSYIVGGLGVPAILGILGGILALLILLLLLLLFARRRKVEKEPLLPPEDDMRDNVYNYDEEGGGEEDQDYDLSQLHRGLDARPEVIRNDVAPPLMAAPQYRPRPANPDEIGNFIDENLKAADTDPTAPPYDSLLVFDYEGGGSEATSLSSLNSSASDQDQDYDYLNEWGNRFKKLAELYGGGEDDE.

An N-terminal signal peptide occupies residues 1–26 (MGRRWGSPALQRFPVLVLLLLLQVCG). Positions 27-160 (RRCDEAAPCQ…DPGFLRRQKR (134 aa)) are excised as a propeptide. Cadherin domains lie at 161-268 (DWVI…KPVF), 269-381 (IKEV…IPIF), 382-493 (NPTM…PPVF), 494-599 (VPPI…DNGP), and 600-704 (TPEP…RRSY). Topologically, residues 161–714 (DWVIPPISCL…IVGGLGVPAI (554 aa)) are extracellular. Aspartate 263 contributes to the Ca(2+) binding site. N-linked (GlcNAc...) asparagine glycosylation occurs at asparagine 291. Residue aspartate 294 participates in Ca(2+) binding. N-linked (GlcNAc...) asparagine glycosylation is present at asparagine 346. N-linked (GlcNAc...) asparagine glycosylation is found at asparagine 564 and asparagine 643. A helical transmembrane segment spans residues 715-735 (LGILGGILALLILLLLLLLFA). Topologically, residues 736–887 (RRRKVEKEPL…ELYGGGEDDE (152 aa)) are cytoplasmic. The interval 745–770 (LLPPEDDMRDNVYNYDEEGGGEEDQD) is disordered. The span at 759–770 (YDEEGGGEEDQD) shows a compositional bias: acidic residues.

Homodimer. Interacts with CTNNA2. Expressed in the liver.

The protein resides in the cell junction. The protein localises to the adherens junction. It is found in the cell membrane. Its subcellular location is the endosome. It localises to the golgi apparatus. The protein resides in the trans-Golgi network. The protein localises to the cytoplasm. It is found in the desmosome. Cadherins are calcium-dependent cell adhesion proteins. They preferentially interact with themselves in a homophilic manner in connecting cells; cadherins may thus contribute to the sorting of heterogeneous cell types. Promotes organization of radial actin fiber structure and cellular response to contractile forces, via anchoring of radial actin fibers to CDH1 junction complexes at the cell membrane. E-cadherin is a ligand for integrin alpha-E/beta-7. This is Cadherin-1 (CDH1) from Gallus gallus (Chicken).